The following is a 259-amino-acid chain: Leucine-rich repeat-containing protein 3B (259 aa).

An N-terminal signal peptide occupies residues 1–33 (MNLVDLWLSRSLSMCLLLQSFVLMILCFHSASM). Positions 34–64 (CPKGCLCSSSGGLNVTCSNANLKEIPRDLPP) constitute an LRRNT domain. Residue Asn-47 is glycosylated (N-linked (GlcNAc...) asparagine). LRR repeat units follow at residues 65 to 86 (ETVL…IFKD), 89 to 110 (QLRV…AFKG), and 114 to 135 (TLQT…AFNN). Asn-94 is a glycosylation site (N-linked (GlcNAc...) asparagine). The region spanning 145–197 (NPWHCDCTLQQVLRSMASNHETAHNVICKTSVLDEHAGRPFLNAANDADLCNL) is the LRRCT domain. A helical membrane pass occupies residues 205–225 (AMLVTMFGWFTMVISYVVYYV).

It belongs to the LRRC3 family.

Its subcellular location is the membrane. In Mus musculus (Mouse), this protein is Leucine-rich repeat-containing protein 3B (Lrrc3b).